Reading from the N-terminus, the 520-residue chain is Probable methylmalonate-semialdehyde/malonate-semialdehyde dehydrogenase [acylating], mitochondrial (520 aa).

Positions 169, 171, 195, 198, 199, and 248 each coordinate NAD(+). The active-site Nucleophile is the cysteine 303. Residue glutamate 403 coordinates NAD(+).

Belongs to the aldehyde dehydrogenase family. In terms of assembly, homotetramer.

The protein resides in the mitochondrion. It catalyses the reaction 2-methyl-3-oxopropanoate + NAD(+) + CoA + H2O = propanoyl-CoA + hydrogencarbonate + NADH + H(+). It carries out the reaction 3-oxopropanoate + NAD(+) + CoA + H2O = hydrogencarbonate + acetyl-CoA + NADH + H(+). Functionally, probable malonate and methylmalonate semialdehyde dehydrogenase involved in the catabolism of valine, thymine, and compounds catabolized by way of beta-alanine, including uracil and cytidine. This is Probable methylmalonate-semialdehyde/malonate-semialdehyde dehydrogenase [acylating], mitochondrial from Drosophila melanogaster (Fruit fly).